We begin with the raw amino-acid sequence, 142 residues long: Hemoglobin subunit alpha-1 (142 aa).

S1 is subject to N-acetylserine. The 142-residue stretch at 1-142 folds into the Globin domain; sequence SLSDKDKAAV…VALALAERYR (142 aa). H59 contacts O2. H88 contacts heme b.

It belongs to the globin family. In terms of assembly, hb1 is a heterotetramer of two alpha-2 chains and two beta chains, while Hb2 is a heterotetramer of two alpha-2 chains and two beta chains. In terms of tissue distribution, red blood cells.

Involved in oxygen transport from gills to the various peripheral tissues. The protein is Hemoglobin subunit alpha-1 (hba1) of Notothenia angustata (Rockcod).